A 364-amino-acid chain; its full sequence is Natterin-3 (364 aa).

An N-terminal signal peptide occupies residues 1–18 (MKLSVLVVTLLAVSWTSA). The propeptide occupies 19–42 (QPETFSIQTKEANMNPEPANIRVA).

It belongs to the natterin family. In terms of processing, contains 4 disulfide bonds. In terms of tissue distribution, expressed by the venom gland.

It is found in the secreted. Inhibited by tissue-kallikrein inhibitor TKI and trasylol. Plasma kallikrein inhibitor PKSI527 and classical inhibitors of serine-, metallo-, thiol- or aspartate-peptidases evokes a minor inhibition of the peptide digestion. Shows nociceptive, edema-inducing and kininogenase activity with release of kallidin from low molecular weight kininogen. The cleavage occurs at Met-Lys bonds. In Thalassophryne nattereri (Copper Joe toadfish), this protein is Natterin-3.